A 513-amino-acid polypeptide reads, in one-letter code: Na(+)/H(+) antiporter NhaB (513 aa).

The next 12 helical transmembrane spans lie at Leu23–Ala43, Ile52–Ile72, Leu97–Phe117, Leu120–Phe140, Phe144–Ile164, Leu202–Pro222, Phe238–Leu258, Ala303–Ile323, Thr348–Ile368, Leu391–Ile411, Ala447–Ile467, and Val475–Phe495.

It belongs to the NhaB Na(+)/H(+) (TC 2.A.34) antiporter family.

The protein localises to the cell inner membrane. The catalysed reaction is 2 Na(+)(in) + 3 H(+)(out) = 2 Na(+)(out) + 3 H(+)(in). Its function is as follows. Na(+)/H(+) antiporter that extrudes sodium in exchange for external protons. This Escherichia coli O45:K1 (strain S88 / ExPEC) protein is Na(+)/H(+) antiporter NhaB.